Consider the following 86-residue polypeptide: MAHKKAGGSSRNGRDSAGQRRGVKKFGGEPVRSGNILIRQLGTKVHPGTNVGCGRDYTLFAKIDGVVKFEDFGKNKKRVSVYPAAE.

Positions 1-31 are disordered; it reads MAHKKAGGSSRNGRDSAGQRRGVKKFGGEPV.

Belongs to the bacterial ribosomal protein bL27 family.

In Desulfotalea psychrophila (strain LSv54 / DSM 12343), this protein is Large ribosomal subunit protein bL27.